The sequence spans 280 residues: Shikimate dehydrogenase (NADP(+)) (280 aa).

Shikimate is bound by residues 20–22 and Thr-67; that span reads SLS. The active-site Proton acceptor is the Lys-71. Shikimate is bound by residues Asn-92 and Asp-107. Residues 131 to 135 and Gly-220 contribute to the NADP(+) site; that span reads GAGGA. A shikimate-binding site is contributed by Tyr-222. Residue Gly-243 participates in NADP(+) binding.

It belongs to the shikimate dehydrogenase family. As to quaternary structure, homodimer.

The catalysed reaction is shikimate + NADP(+) = 3-dehydroshikimate + NADPH + H(+). Its pathway is metabolic intermediate biosynthesis; chorismate biosynthesis; chorismate from D-erythrose 4-phosphate and phosphoenolpyruvate: step 4/7. In terms of biological role, involved in the biosynthesis of the chorismate, which leads to the biosynthesis of aromatic amino acids. Catalyzes the reversible NADPH linked reduction of 3-dehydroshikimate (DHSA) to yield shikimate (SA). This chain is Shikimate dehydrogenase (NADP(+)), found in Maricaulis maris (strain MCS10) (Caulobacter maris).